Reading from the N-terminus, the 161-residue chain is Large ribosomal subunit protein uL30m (161 aa).

The transit peptide at 1 to 34 (MAGILRLVVQRPPGGLQTVTKGVESLIGTDWIRH) directs the protein to the mitochondrion.

The protein belongs to the universal ribosomal protein uL30 family. Component of the mitochondrial ribosome large subunit (39S) which comprises a 16S rRNA and about 50 distinct proteins.

The protein localises to the mitochondrion. This chain is Large ribosomal subunit protein uL30m (MRPL30), found in Macaca fascicularis (Crab-eating macaque).